A 44-amino-acid chain; its full sequence is Conotoxin S5.1 (44 aa).

Contains 3 disulfide bonds. As to expression, expressed by the venom duct.

The protein localises to the secreted. This chain is Conotoxin S5.1, found in Conus striatus (Striated cone).